Consider the following 28-residue polypeptide: Alkaline serine protease NJP (28 aa).

Inhibited by PMSF. Not or very weakly inhibited by EDTA, EGTA, beta-mercaptoethanol, benzamidine, aprotinin, iodoacetic acid, pepstatin A and SBTI. In terms of biological role, alkaline thrombin-like serine protease. Has fibrinolytic and fibrinogenolytic but not plasminogenolytic activity. Cleaves fibrinogen chains Aalpha, Bbeta and gamma chains in that order. Cleaves after Arg and Lys residues. The polypeptide is Alkaline serine protease NJP (Hediste japonica (Polychaete worm)).